Here is a 99-residue protein sequence, read N- to C-terminus: MALTKADMSERLFEELGLNKREAKELVEMFFEEVRMALERGEQVKLSGFGNFTLRDKNQRPGRNPKTGEEIPISARRVVTFRPGQKLKARVEAYVGSGE.

The protein belongs to the bacterial histone-like protein family. As to quaternary structure, heterodimer of an alpha and a beta chain.

Its function is as follows. This protein is one of the two subunits of integration host factor, a specific DNA-binding protein that functions in genetic recombination as well as in transcriptional and translational control. This chain is Integration host factor subunit alpha, found in Thioalkalivibrio sulfidiphilus (strain HL-EbGR7).